Reading from the N-terminus, the 234-residue chain is Biosynthetic peptidoglycan transglycosylase (234 aa).

The chain crosses the membrane as a helical span at residues 8 to 28; it reads VIGCFAAGVVALNLYFFAAIA.

Belongs to the glycosyltransferase 51 family.

Its subcellular location is the cell inner membrane. The enzyme catalyses [GlcNAc-(1-&gt;4)-Mur2Ac(oyl-L-Ala-gamma-D-Glu-L-Lys-D-Ala-D-Ala)](n)-di-trans,octa-cis-undecaprenyl diphosphate + beta-D-GlcNAc-(1-&gt;4)-Mur2Ac(oyl-L-Ala-gamma-D-Glu-L-Lys-D-Ala-D-Ala)-di-trans,octa-cis-undecaprenyl diphosphate = [GlcNAc-(1-&gt;4)-Mur2Ac(oyl-L-Ala-gamma-D-Glu-L-Lys-D-Ala-D-Ala)](n+1)-di-trans,octa-cis-undecaprenyl diphosphate + di-trans,octa-cis-undecaprenyl diphosphate + H(+). It participates in cell wall biogenesis; peptidoglycan biosynthesis. Peptidoglycan polymerase that catalyzes glycan chain elongation from lipid-linked precursors. The polypeptide is Biosynthetic peptidoglycan transglycosylase (Ralstonia nicotianae (strain ATCC BAA-1114 / GMI1000) (Ralstonia solanacearum)).